We begin with the raw amino-acid sequence, 665 residues long: DNA mismatch repair protein MutL (665 aa).

2 stretches are compositionally biased toward polar residues: residues 348-361 (LEATAASNPDNGLS) and 407-421 (PSSQGDYQPQDNSRY). Disordered regions lie at residues 348–370 (LEATAASNPDNGLSPSRGHAEEG) and 385–445 (VHRG…STSA). Residues 426–445 (YSTNAASTNTASNYSHSTSA) show a composition bias toward low complexity.

It belongs to the DNA mismatch repair MutL/HexB family.

Functionally, this protein is involved in the repair of mismatches in DNA. It is required for dam-dependent methyl-directed DNA mismatch repair. May act as a 'molecular matchmaker', a protein that promotes the formation of a stable complex between two or more DNA-binding proteins in an ATP-dependent manner without itself being part of a final effector complex. In Shewanella denitrificans (strain OS217 / ATCC BAA-1090 / DSM 15013), this protein is DNA mismatch repair protein MutL.